Reading from the N-terminus, the 244-residue chain is Lipoprotein-releasing system ATP-binding protein LolD (244 aa).

The ABC transporter domain occupies 19-244; the sequence is IRAEALAKTY…KLRELAPSAV (226 aa). An ATP-binding site is contributed by 55 to 62; the sequence is GASGAGKS.

It belongs to the ABC transporter superfamily. Lipoprotein translocase (TC 3.A.1.125) family. As to quaternary structure, the complex is composed of two ATP-binding proteins (LolD) and two transmembrane proteins (LolC and LolE).

It is found in the cell inner membrane. Functionally, part of the ABC transporter complex LolCDE involved in the translocation of mature outer membrane-directed lipoproteins, from the inner membrane to the periplasmic chaperone, LolA. Responsible for the formation of the LolA-lipoprotein complex in an ATP-dependent manner. This chain is Lipoprotein-releasing system ATP-binding protein LolD, found in Xanthomonas axonopodis pv. citri (strain 306).